The chain runs to 316 residues: Ribosomal RNA small subunit methyltransferase H (316 aa).

S-adenosyl-L-methionine-binding positions include 35–37 (SGH), Asp-55, Phe-84, Asp-105, and Gln-112.

The protein belongs to the methyltransferase superfamily. RsmH family.

The protein localises to the cytoplasm. The enzyme catalyses cytidine(1402) in 16S rRNA + S-adenosyl-L-methionine = N(4)-methylcytidine(1402) in 16S rRNA + S-adenosyl-L-homocysteine + H(+). Specifically methylates the N4 position of cytidine in position 1402 (C1402) of 16S rRNA. The sequence is that of Ribosomal RNA small subunit methyltransferase H from Streptococcus dysgalactiae subsp. equisimilis (strain GGS_124).